The sequence spans 178 residues: Long polar fimbria protein A (178 aa).

Positions 1-24 (MEFLMKKVVFALSALAVVSTSAFA) are cleaved as a signal peptide.

Belongs to the fimbrial protein family.

The protein localises to the fimbrium. The sequence is that of Long polar fimbria protein A (lpfA) from Salmonella typhimurium (strain LT2 / SGSC1412 / ATCC 700720).